Here is a 349-residue protein sequence, read N- to C-terminus: tRNA pseudouridine synthase D (349 aa).

Asp77 (nucleophile) is an active-site residue. One can recognise a TRUD domain in the interval 151–309 (GVPNYFGEQR…ETIDESTLKL (159 aa)).

The protein belongs to the pseudouridine synthase TruD family.

The catalysed reaction is uridine(13) in tRNA = pseudouridine(13) in tRNA. In terms of biological role, responsible for synthesis of pseudouridine from uracil-13 in transfer RNAs. The protein is tRNA pseudouridine synthase D of Pseudoalteromonas translucida (strain TAC 125).